The primary structure comprises 280 residues: MPELPEVETTRKGIQPKVEGQAIQKIIIRNGKLRWPVDPSLVEKLPGLVVLSIKRRAKYLLLETDQGHLIIHLGMSGNLRVLPQHEPAVKHDHIDLLLENGFLLRYHDPRRFGSWLWTEAPIQEHSLLKSLGPEPLTDAFNAEYLFQKLQGRKTAIKTFIMNNQIVVGVGNIYANESLFLSGIHPTRPAQSLTLTEATKLTAHIKTVLSAAIEQGGTTLKDFLTPDGKPGYFEQKLNVYGRENLPCPQCDSAIEKVVLNQRAAYFCSNCQKQLDSTVKIK.

Pro2 acts as the Schiff-base intermediate with DNA in catalysis. Catalysis depends on Glu3, which acts as the Proton donor. Lys58 serves as the catalytic Proton donor; for beta-elimination activity. DNA is bound by residues His91, Arg110, and Arg152. Residues 237 to 271 (NVYGRENLPCPQCDSAIEKVVLNQRAAYFCSNCQK) form an FPG-type zinc finger. Arg261 functions as the Proton donor; for delta-elimination activity in the catalytic mechanism.

It belongs to the FPG family. Monomer. Zn(2+) serves as cofactor.

It carries out the reaction Hydrolysis of DNA containing ring-opened 7-methylguanine residues, releasing 2,6-diamino-4-hydroxy-5-(N-methyl)formamidopyrimidine.. The catalysed reaction is 2'-deoxyribonucleotide-(2'-deoxyribose 5'-phosphate)-2'-deoxyribonucleotide-DNA = a 3'-end 2'-deoxyribonucleotide-(2,3-dehydro-2,3-deoxyribose 5'-phosphate)-DNA + a 5'-end 5'-phospho-2'-deoxyribonucleoside-DNA + H(+). In terms of biological role, involved in base excision repair of DNA damaged by oxidation or by mutagenic agents. Acts as a DNA glycosylase that recognizes and removes damaged bases. Has a preference for oxidized purines, such as 7,8-dihydro-8-oxoguanine (8-oxoG). Has AP (apurinic/apyrimidinic) lyase activity and introduces nicks in the DNA strand. Cleaves the DNA backbone by beta-delta elimination to generate a single-strand break at the site of the removed base with both 3'- and 5'-phosphates. The chain is Formamidopyrimidine-DNA glycosylase from Hydrogenovibrio crunogenus (strain DSM 25203 / XCL-2) (Thiomicrospira crunogena).